The following is a 405-amino-acid chain: Probable tRNA sulfurtransferase (405 aa).

The 106-residue stretch at 60 to 165 (DQVMARLSQV…REAIYLSTKT (106 aa)) folds into the THUMP domain. Residues 183–184 (ML), 208–209 (HF), arginine 265, glycine 287, and glutamine 296 contribute to the ATP site.

Belongs to the ThiI family.

It is found in the cytoplasm. It catalyses the reaction [ThiI sulfur-carrier protein]-S-sulfanyl-L-cysteine + a uridine in tRNA + 2 reduced [2Fe-2S]-[ferredoxin] + ATP + H(+) = [ThiI sulfur-carrier protein]-L-cysteine + a 4-thiouridine in tRNA + 2 oxidized [2Fe-2S]-[ferredoxin] + AMP + diphosphate. The catalysed reaction is [ThiS sulfur-carrier protein]-C-terminal Gly-Gly-AMP + S-sulfanyl-L-cysteinyl-[cysteine desulfurase] + AH2 = [ThiS sulfur-carrier protein]-C-terminal-Gly-aminoethanethioate + L-cysteinyl-[cysteine desulfurase] + A + AMP + 2 H(+). The protein operates within cofactor biosynthesis; thiamine diphosphate biosynthesis. In terms of biological role, catalyzes the ATP-dependent transfer of a sulfur to tRNA to produce 4-thiouridine in position 8 of tRNAs, which functions as a near-UV photosensor. Also catalyzes the transfer of sulfur to the sulfur carrier protein ThiS, forming ThiS-thiocarboxylate. This is a step in the synthesis of thiazole, in the thiamine biosynthesis pathway. The sulfur is donated as persulfide by IscS. This chain is Probable tRNA sulfurtransferase, found in Lacticaseibacillus paracasei (strain ATCC 334 / BCRC 17002 / CCUG 31169 / CIP 107868 / KCTC 3260 / NRRL B-441) (Lactobacillus paracasei).